The primary structure comprises 292 residues: Homoserine kinase (292 aa).

84–94 (PLSRGLGSSSA) is an ATP binding site.

Belongs to the GHMP kinase family. Homoserine kinase subfamily.

It is found in the cytoplasm. It carries out the reaction L-homoserine + ATP = O-phospho-L-homoserine + ADP + H(+). It functions in the pathway amino-acid biosynthesis; L-threonine biosynthesis; L-threonine from L-aspartate: step 4/5. Its function is as follows. Catalyzes the ATP-dependent phosphorylation of L-homoserine to L-homoserine phosphate. The chain is Homoserine kinase from Campylobacter jejuni subsp. jejuni serotype O:2 (strain ATCC 700819 / NCTC 11168).